A 622-amino-acid polypeptide reads, in one-letter code: Low affinity potassium transport system protein Kup (622 aa).

Transmembrane regions (helical) follow at residues 9–29, 49–69, 103–123, 137–157, 165–185, 213–233, 247–267, 276–296, 337–357, 363–383, 396–416, and 419–439; these read LPAITLAAIGVVYGDIGTSPL, VFGFLSLIFWLLIFVVSIKYL, VIMGLIGGSFFYGEVVITPAI, PQLDTWIVPLSIIVLTLLFMI, VGKLFAPIMLTWFLILAGLGL, VSFIALGAVVLSITGGEVLYA, WFTVVLPSLTLNYFGQGALLL, PFFLLAPDWALIPLLIIAALA, IYIPFVNWMLYVAVVIVIVSF, LAAAYGIAVTGTMVLTSILST, FVALILIAFLCVDIPLFTANL, and LLSGGWLPLSLGTVMFIVMTT.

It belongs to the HAK/KUP transporter (TC 2.A.72) family.

Its subcellular location is the cell inner membrane. It catalyses the reaction K(+)(in) + H(+)(in) = K(+)(out) + H(+)(out). In terms of biological role, responsible for the low-affinity transport of potassium into the cell. Likely operates as a K(+):H(+) symporter. The protein is Low affinity potassium transport system protein Kup of Shigella flexneri.